We begin with the raw amino-acid sequence, 829 residues long: DNA ligase (829 aa).

The tract at residues 1–23 is disordered; it reads MPAQTSRARPVEEMTAAQAREAH. NAD(+) contacts are provided by residues 47–51, 96–97, and E130; these read DAEYD and SL. The active-site N6-AMP-lysine intermediate is the K132. The NAD(+) site is built by R153, E190, K306, and K330. Positions 453, 456, 477, and 483 each coordinate Zn(2+). The 80-residue stretch at 750 to 829 folds into the BRCT domain; sequence AAAAVFSGQT…AEWLAMVEAA (80 aa).

Belongs to the NAD-dependent DNA ligase family. LigA subfamily. Requires Mg(2+) as cofactor. Mn(2+) is required as a cofactor.

The enzyme catalyses NAD(+) + (deoxyribonucleotide)n-3'-hydroxyl + 5'-phospho-(deoxyribonucleotide)m = (deoxyribonucleotide)n+m + AMP + beta-nicotinamide D-nucleotide.. In terms of biological role, DNA ligase that catalyzes the formation of phosphodiester linkages between 5'-phosphoryl and 3'-hydroxyl groups in double-stranded DNA using NAD as a coenzyme and as the energy source for the reaction. It is essential for DNA replication and repair of damaged DNA. This Methylobacterium nodulans (strain LMG 21967 / CNCM I-2342 / ORS 2060) protein is DNA ligase.